The sequence spans 1604 residues: Collagen alpha-1(XVI) chain (1604 aa).

An N-terminal signal peptide occupies residues 1–21; the sequence is MWVSWAPGLWLLGLWATFGHG. Asn-47 carries an N-linked (GlcNAc...) asparagine glycan. A Laminin G-like domain is found at 50–231; sequence GFNLIHRLSL…LQQVHIYCDP (182 aa). Positions 232 to 374 are nonhelical region 10 (NC10); the sequence is ELVLEEGCCE…SPDAPLQCAE (143 aa). Residues 301-311 are compositionally biased toward basic and acidic residues; that stretch reads AERGAKVHQET. Positions 301 to 509 are disordered; sequence AERGAKVHQE…KGEKGDPCEV (209 aa). Residue Asn-327 is glycosylated (N-linked (GlcNAc...) asparagine). Positions 375–423 constitute a Collagen-like 1 domain; sequence GPKGEKGESGALGPSGLPGSTGEKGQKGEKGDGGIKGVPGKPGRDGRPG. A triple-helical region 9 (COL9) with 3 imperfections region spans residues 375-506; sequence GPKGEKGESG…PGVKGEKGDP (132 aa). Low complexity predominate over residues 383–397; sequence SGALGPSGLPGSTGE. Residues 398–407 are compositionally biased toward basic and acidic residues; that stretch reads KGQKGEKGDG. Pro residues predominate over residues 449–460; the sequence is PGPPGLPGPPGI. Positions 486 to 495 are enriched in gly residues; it reads GKEGPGGKPG. Residues 507–521 form a nonhelical region 9 (NC9) region; it reads CEVCPTLPEGFQNFV. The tract at residues 522 to 555 is triple-helical region 8 (COL8) with 1 imperfection; that stretch reads GLPGKPGPKGEPGDPVPARGDPGIQGIKGEKGEP. The Cell attachment site motif lies at 540–542; it reads RGD. Positions 556 to 572 are nonhelical region 8 (NC8); sequence CLSCSSVVGAQHLVSST. A triple-helical region 7 (COL7) with 1 imperfection region spans residues 573–631; it reads GASGDVGSPGFGLPGLPGRAGVPGLKGEKGNFGEAGPAGSPGPPGPVGPAGIKGAKGEP. 2 consecutive Collagen-like domains span residues 573–633 and 667–721; these read GASG…EPCE and GLPG…GEKG. The disordered stretch occupies residues 604 to 917; the sequence is FGEAGPAGSP…PPGIPGPPGP (314 aa). The nonhelical region 7 (NC7) stretch occupies residues 632-652; sequence CEPCPALSNLQDGDVRVVALP. A triple-helical region 6 (COL6) with 1 imperfection region spans residues 653–723; the sequence is GPSGEKGEPG…AGPKGEKGDG (71 aa). The segment covering 674-684 has biased composition (basic and acidic residues); sequence KAGERGLKGQK. Low complexity predominate over residues 686–702; the sequence is DAGNPGDPGTPGTTGRP. The segment at 724–738 is nonhelical region 6 (NC6); the sequence is CTACPSLQGTVTDMA. Residues 739 to 876 form a triple-helical region 5 (COL5) with 3 imperfections region; sequence GRPGQPGPKG…RGEKGEPGEC (138 aa). Low complexity-rich tracts occupy residues 766–781, 792–808, and 826–846; these read LPGV…VQGE, PQGE…QGLP, and PGVK…SGPP. Residues 788 to 840 enclose the Collagen-like 4 domain; it reads GVQGPQGEPGAPGLPGIQGLPGPRGPPGPTGEKGAQGSPGVKGATGPVGPPGA. The span at 864–873 shows a compositional bias: basic and acidic residues; the sequence is KGPRGEKGEP. Residues 877–887 form a nonhelical region 5 (NC5) region; that stretch reads SCPSQGDLIFS. In terms of domain architecture, Collagen-like 5 spans 888–938; sequence GMPGAPGLWMGSSWQPGPQGPPGIPGPPGPPGVPGLQGVPGNNGLPGQPGL. The tract at residues 888-939 is triple-helical region 4 (COL4) with 2 imperfections; it reads GMPGAPGLWMGSSWQPGPQGPPGIPGPPGPPGVPGLQGVPGNNGLPGQPGLT. Over residues 905-917 the composition is skewed to pro residues; the sequence is PQGPPGIPGPPGP. The segment at 940–973 is nonhelical region 4 (NC4); sequence AELGSLPIEQHLLKSICGDCVQGQRAHPGYLVEK. Residues 974–988 are triple-helical region 3 (COL3); the sequence is GEKGDQGIPGVPGLD. The segment at 989–1011 is nonhelical region 3 (NC3); that stretch reads NCAQCFLSLERPRAEEARGDNSE. Disordered regions lie at residues 1001-1429 and 1468-1517; these read RAEE…VPGS and MAAA…PGTK. A Cell attachment site motif is present at residues 1006-1008; that stretch reads RGD. Positions 1012–1433 are triple-helical region 2 (COL2) with 2 imperfections; it reads GDPGCVGSPG…PGVPGSMGDM (422 aa). The 58-residue stretch at 1018 to 1075 folds into the Collagen-like 6 domain; that stretch reads GSPGLPGPPGLPGQRGEEGPPGMRGSPGPPGPIGPPGFPGAVGSPGLPGLQGERGLTG. Pro residues-rich tracts occupy residues 1044–1055, 1160–1169, and 1199–1208; these read PGPPGPIGPPGF, FPGPPGPPGF, and SPGPPGPPGI. The segment covering 1217–1226 has biased composition (basic and acidic residues); that stretch reads LDGKDGKPGL. A Cell attachment site motif is present at residues 1227 to 1229; sequence RGD. A compositionally biased stretch (low complexity) spans 1271-1284; it reads RPGAEGEPGAMGPQ. Pro residues-rich tracts occupy residues 1286–1302 and 1330–1342; these read RPGP…PGQP and QPGP…PPGE. The span at 1369–1378 shows a compositional bias: low complexity; it reads DPGAAGQKGQ. Residues 1386–1395 are compositionally biased toward gly residues; that stretch reads GMPGGPGKSG. The segment covering 1420–1429 has biased composition (low complexity); that stretch reads SPGLPGVPGS. The segment at 1434–1472 is nonhelical region 2 (NC2); sequence VNYDEIKRFIRQEIIKMFDERMAYYTSRMQFPMEMAAAP. Collagen-like domains are found at residues 1472-1524 and 1528-1576; these read PGRP…GDIG and AGEN…GKAG. The triple-helical region 1 (COL1) with 2 imperfections stretch occupies residues 1473–1578; sequence GRPGPPGKDG…MGQPGKAGHC (106 aa). Residues 1579-1604 form a nonhelical region 1 (NC1) region; sequence NPSDCFGAMPMEQQYPPMKTMKGPFG.

It belongs to the fibril-associated collagens with interrupted helices (FACIT) family. Homotrimer. Interacts with FBN1, fibronectin and integrins ITGA1/ITGB1 and ITGA2/ITGB1. Integrin ITGA1/ITGB1 binds to a unique site within COL16A1 located close to its C-terminal end between collagenous domains COL1-COL3. Post-translationally, prolines at the third position of the tripeptide repeating unit (G-X-Y) are hydroxylated in some or all of the chains. In terms of processing, glycosylated. In terms of tissue distribution, in papillary dermis, is a component of specialized fibrillin-1-containing microfibrils, whereas in territorial cartilage matrix, it is localized to a discrete population of thin, weakly banded collagen fibrils in association with other collagens (at protein level). In the placenta, where it is found in the amnion, a membranous tissue lining the amniotic cavity. Within the amnion, it is found in an acellular, relatively dense layer of a complex network of reticular fibers. Also located to a fibroblast layer beneath this dense layer. Exists in tissues in association with other types of collagen.

It localises to the secreted. It is found in the extracellular space. The protein localises to the extracellular matrix. In terms of biological role, involved in mediating cell attachment and inducing integrin-mediated cellular reactions, such as cell spreading and alterations in cell morphology. The sequence is that of Collagen alpha-1(XVI) chain (COL16A1) from Homo sapiens (Human).